Here is a 158-residue protein sequence, read N- to C-terminus: Cyclic pyranopterin monophosphate synthase (158 aa).

Substrate contacts are provided by residues 75–77 and 113–114; these read LCH and ME. Residue aspartate 128 is part of the active site.

The protein belongs to the MoaC family. Homohexamer; trimer of dimers.

It catalyses the reaction (8S)-3',8-cyclo-7,8-dihydroguanosine 5'-triphosphate = cyclic pyranopterin phosphate + diphosphate. The protein operates within cofactor biosynthesis; molybdopterin biosynthesis. In terms of biological role, catalyzes the conversion of (8S)-3',8-cyclo-7,8-dihydroguanosine 5'-triphosphate to cyclic pyranopterin monophosphate (cPMP). In Pasteurella multocida (strain Pm70), this protein is Cyclic pyranopterin monophosphate synthase.